We begin with the raw amino-acid sequence, 349 residues long: MNTLLLHCRPGFEGEVCAEISEHAAILEVAGYAKARPDSACAEFICSEPGGAERLMRRLRFADLIFPRQWARGDYLQLPETDRISVLLAHLADYPVCSSLWLEVLDTNDGKELSNFCRKFEAPLRKALVKAGRLDEQGKGPRLLLTFKSGREVFVGIAEANNSALWPMGIPRLKFPRQAPSRSTLKLEEAWHHFIPREQWDTRLAAGMTGVDLGAAPGGWTWQMVNRHIKVSAVDNGPMNADLMDSGLVEHFRADGFTFRPKRPVDWMVCDIVEKPARNAALLETWIGEGLCREAVVNLKLPMKQRYAEVKRLLERIADGLAERGVKASIGCKQLYHDREEVTCHLRRL.

Residues Ser183, 216–219 (APGG), Asp235, Asp255, and Asp271 contribute to the S-adenosyl-L-methionine site. Lys300 (proton acceptor) is an active-site residue.

Belongs to the class I-like SAM-binding methyltransferase superfamily. RNA methyltransferase RlmE family. RlmM subfamily. In terms of assembly, monomer.

The protein localises to the cytoplasm. The catalysed reaction is cytidine(2498) in 23S rRNA + S-adenosyl-L-methionine = 2'-O-methylcytidine(2498) in 23S rRNA + S-adenosyl-L-homocysteine + H(+). Functionally, catalyzes the 2'-O-methylation at nucleotide C2498 in 23S rRNA. In Stutzerimonas stutzeri (strain A1501) (Pseudomonas stutzeri), this protein is Ribosomal RNA large subunit methyltransferase M.